Reading from the N-terminus, the 508-residue chain is Phenylacetaldehyde synthase (508 aa).

Positions 203 and 318 each coordinate L-phenylalanine. Lysine 319 carries the post-translational modification N6-(pyridoxal phosphate)lysine. Position 348 (phenylalanine 348) interacts with L-phenylalanine.

It belongs to the group II decarboxylase family. Homotetramer. It depends on pyridoxal 5'-phosphate as a cofactor.

The enzyme catalyses L-phenylalanine + O2 + H2O + H(+) = 2-phenylacetaldehyde + H2O2 + NH4(+) + CO2. In terms of biological role, bifunctional enzyme that catalyzes the decarboxylation of L-phenylalanine to produce 2-phenylethylamine, which is then oxidized to form 2-phenylacetaldehyde, a constituent of floral scent in petals. 2-phenylacetaldehyde is a precursor of 2-phenylethanol, another constituent of floral scent in petals. In Rosa hybrid cultivar, this protein is Phenylacetaldehyde synthase.